Here is a 394-residue protein sequence, read N- to C-terminus: Acid ceramidase (394 aa).

A signal peptide spans 1–20 (MLGRSLLTWVLAAAVTCAQA). A disulfide bridge links Cys-30 with Cys-339. The active-site Nucleophile is Cys-142. Asn-194, Asn-258, Asn-285, and Asn-341 each carry an N-linked (GlcNAc...) asparagine glycan. Cysteines 387 and 391 form a disulfide.

Belongs to the acid ceramidase family. Heterodimer; disulfide-linked. The heterodimer is composed of the disulfide-linked alpha and beta chains produced by autocatalytic cleavage of the precursor. In terms of processing, N-glycosylated. Post-translationally, proteolytically cleaved into two chains alpha and beta that remain associated via a disulfide bond. Cleavage gives rise to a conformation change that activates the enzyme. The same catalytic Cys residue mediates the autoproteolytic cleavage and subsequent hydrolysis of lipid substrates. The beta chain may undergo an additional C-terminal processing.

It localises to the lysosome. It is found in the secreted. It carries out the reaction an N-acylsphing-4-enine + H2O = sphing-4-enine + a fatty acid. The catalysed reaction is N-dodecanoylsphing-4-enine + H2O = dodecanoate + sphing-4-enine. It catalyses the reaction N-tetradecanoylsphing-4-enine + H2O = tetradecanoate + sphing-4-enine. The enzyme catalyses N-hexadecanoylsphing-4-enine + H2O = sphing-4-enine + hexadecanoate. It carries out the reaction N-octadecanoylsphing-4-enine + H2O = sphing-4-enine + octadecanoate. The catalysed reaction is N-dodecanoyl-(4R)-hydroxysphinganine + H2O = (4R)-hydroxysphinganine + dodecanoate. It catalyses the reaction N-(dodecanoyl)-sphinganine + H2O = dodecanoate + sphinganine. The enzyme catalyses N-(acetyl)-sphing-4-enine + H2O = sphing-4-enine + acetate. It carries out the reaction N-(hexanoyl)sphing-4-enine + H2O = hexanoate + sphing-4-enine. The catalysed reaction is N-octanoylsphing-4-enine + H2O = octanoate + sphing-4-enine. It catalyses the reaction N-(9Z-octadecenoyl)-sphing-4-enine + H2O = sphing-4-enine + (9Z)-octadecenoate. The enzyme catalyses N-dodecanoylethanolamine + H2O = dodecanoate + ethanolamine. Its pathway is lipid metabolism; sphingolipid metabolism. Lysosomal ceramidase that hydrolyzes sphingolipid ceramides into sphingosine and free fatty acids at acidic pH. Ceramides, sphingosine, and its phosphorylated form sphingosine-1-phosphate are bioactive lipids that mediate cellular signaling pathways regulating several biological processes including cell proliferation, apoptosis and differentiation. Has a higher catalytic efficiency towards C12-ceramides versus other ceramides. Also catalyzes the reverse reaction allowing the synthesis of ceramides from fatty acids and sphingosine. For the reverse synthetic reaction, the natural sphingosine D-erythro isomer is more efficiently utilized as a substrate compared to D-erythro-dihydrosphingosine and D-erythro-phytosphingosine, while the fatty acids with chain lengths of 12 or 14 carbons are the most efficiently used. Also has an N-acylethanolamine hydrolase activity. By regulating the levels of ceramides, sphingosine and sphingosine-1-phosphate in the epidermis, mediates the calcium-induced differentiation of epidermal keratinocytes. Also indirectly regulates tumor necrosis factor/TNF-induced apoptosis. By regulating the intracellular balance between ceramides and sphingosine, in adrenocortical cells, probably also acts as a regulator of steroidogenesis. The sequence is that of Acid ceramidase from Rattus norvegicus (Rat).